A 366-amino-acid chain; its full sequence is Galactoside alpha-(1,2)-fucosyltransferase 1 (366 aa).

Residues 1–8 (MWPLSHRH) lie on the Cytoplasmic side of the membrane. The helical; Signal-anchor for type II membrane protein transmembrane segment at 9-25 (LCLAFLLVCVLSAISFF) threads the bilayer. Over 26 to 366 (LHIHQDSIRH…LSPLWTLAEP (341 aa)) the chain is Lumenal. N-linked (GlcNAc...) asparagine glycosylation is found at Asn66, Asn302, and Asn328.

It belongs to the glycosyltransferase 11 family.

It localises to the golgi apparatus. Its subcellular location is the golgi stack membrane. The enzyme catalyses a beta-D-galactosyl-(1-&gt;4)-N-acetyl-beta-D-glucosaminyl derivative + GDP-beta-L-fucose = an alpha-L-Fuc-(1-&gt;2)-beta-D-Gal-(1-&gt;4)-beta-D-GlcNAc derivative + GDP + H(+). The catalysed reaction is a ganglioside GA1 + GDP-beta-L-fucose = a ganglioside Fuc-GA1 + GDP + H(+). It carries out the reaction a beta-D-Gal-(1-&gt;3)-beta-D-GlcNAc-(1-&gt;3)-beta-D-Gal-(1-&gt;4)-beta-D-Glc-(1&lt;-&gt;1')-Cer(d18:1(4E)) + GDP-beta-L-fucose = alpha-L-fucosyl-(1-&gt;2)- beta-D-galactosyl-(1-&gt;3)-N-acetyl-beta-D-glucosaminyl-(1-&gt;3)-beta-D-galactosyl-(1-&gt;4)-beta-D-glucosyl-(1&lt;-&gt;1')-N-acylsphing-4-enine + GDP + H(+). It catalyses the reaction a neolactoside nLc4Cer(d18:1(4E)) + GDP-beta-L-fucose = a neolactoside IV(2)-alpha-Fuc-nLc4Cer(d18:1(4E)) + GDP + H(+). The enzyme catalyses a ganglioside GM1 + GDP-beta-L-fucose = a ganglioside Fuc-GM1 + GDP + H(+). The catalysed reaction is beta-D-galactosyl-(1-&gt;3)-N-acetyl-D-galactosamine + GDP-beta-L-fucose = alpha-L-fucosyl-(1-&gt;2)-beta-D-galactosyl-(1-&gt;3)-N-acetyl-D-galactosamine + GDP + H(+). It functions in the pathway protein modification; protein glycosylation. Functionally, catalyzes the transfer of L-fucose, from a guanosine diphosphate-beta-L-fucose, to the terminal galactose residue of glycoconjugates through an alpha(1,2) linkage leading to H antigen synthesis that is an intermediate substrate in the synthesis of ABO blood group antigens. H antigen is essential for maturation of the glomerular layer of the main olfactory bulb, in cell migration and early cell-cell contacts during tumor associated angiogenesis. Preferentially fucosylates soluble lactose and to a lesser extent fucosylates glycolipids gangliosides GA1 and GM1a. The chain is Galactoside alpha-(1,2)-fucosyltransferase 1 from Aotus nancymaae (Ma's night monkey).